We begin with the raw amino-acid sequence, 112 residues long: UPF0482 protein Ent638_1930 (112 aa).

The N-terminal stretch at 1 to 27 (MTTLRKRLCLATLLSLTALAFTAPVSA) is a signal peptide.

This sequence belongs to the UPF0482 family.

In Enterobacter sp. (strain 638), this protein is UPF0482 protein Ent638_1930.